The chain runs to 313 residues: 2,3-dihydroxyphenylpropionate/2,3-dihydroxicinnamic acid 1,2-dioxygenase (313 aa).

Catalysis depends on H115, which acts as the Proton donor. Catalysis depends on H179, which acts as the Proton acceptor.

It belongs to the LigB/MhpB extradiol dioxygenase family. As to quaternary structure, homotetramer. The cofactor is Fe(2+).

The enzyme catalyses 3-(2,3-dihydroxyphenyl)propanoate + O2 = (2Z,4E)-2-hydroxy-6-oxonona-2,4-dienedioate + H(+). It carries out the reaction (2E)-3-(2,3-dihydroxyphenyl)prop-2-enoate + O2 = (2Z,4E,7E)-2-hydroxy-6-oxonona-2,4,7-trienedioate + H(+). Its pathway is aromatic compound metabolism; 3-phenylpropanoate degradation. In terms of biological role, catalyzes the non-heme iron(II)-dependent oxidative cleavage of 2,3-dihydroxyphenylpropionic acid and 2,3-dihydroxicinnamic acid into 2-hydroxy-6-ketononadienedioate and 2-hydroxy-6-ketononatrienedioate, respectively. The sequence is that of 2,3-dihydroxyphenylpropionate/2,3-dihydroxicinnamic acid 1,2-dioxygenase from Xanthobacter autotrophicus (strain ATCC BAA-1158 / Py2).